Consider the following 37-residue polypeptide: Large ribosomal subunit protein bL36 (37 aa).

This sequence belongs to the bacterial ribosomal protein bL36 family.

The chain is Large ribosomal subunit protein bL36 from Geobacter metallireducens (strain ATCC 53774 / DSM 7210 / GS-15).